The sequence spans 61 residues: Small ribosomal subunit protein uS14 (61 aa).

Residues C24, C27, C40, and C43 each coordinate Zn(2+).

It belongs to the universal ribosomal protein uS14 family. Zinc-binding uS14 subfamily. As to quaternary structure, part of the 30S ribosomal subunit. Contacts proteins S3 and S10. Zn(2+) serves as cofactor.

Functionally, binds 16S rRNA, required for the assembly of 30S particles and may also be responsible for determining the conformation of the 16S rRNA at the A site. The chain is Small ribosomal subunit protein uS14 from Campylobacter hominis (strain ATCC BAA-381 / DSM 21671 / CCUG 45161 / LMG 19568 / NCTC 13146 / CH001A).